The chain runs to 352 residues: MSTSQTDNVKASTHATEYDSVTNNIVVAALYKFTRFADFEKYRDPILNTMLDNDVKGTLLIASEGINGTISGTRQGIDNVLDYLRSIEEIGSFTFKESYTDAQPFYRTKVKLKKEIVTMGVENIDPLQSVGRYVKPSDWNALISDPDVILIDTRNDYEVKIGTFQNAVNPNTETFREFPEYVAKELDPSKHKKVAMFCTGGIRCEKSTAFMREQGFEEVYHLEGGILKYLEEVPASDSMWEGDCFVFDNRVSVNHNLEKGSYEQCFACRMPITQAEMQSPAYIKGESCPHCIDKATDEQKARFREREHQMQLAQKRGEAHIGSDVIDVIEKRKAAKIEARRQADAANKTKAG.

Positions 144 to 238 (SDPDVILIDT…YLEEVPASDS (95 aa)) constitute a Rhodanese domain. Cys198 serves as the catalytic Cysteine persulfide intermediate.

This sequence belongs to the TrhO family.

The enzyme catalyses uridine(34) in tRNA + AH2 + O2 = 5-hydroxyuridine(34) in tRNA + A + H2O. Its function is as follows. Catalyzes oxygen-dependent 5-hydroxyuridine (ho5U) modification at position 34 in tRNAs. This is tRNA uridine(34) hydroxylase from Psychrobacter cryohalolentis (strain ATCC BAA-1226 / DSM 17306 / VKM B-2378 / K5).